An 89-amino-acid chain; its full sequence is Small ribosomal subunit protein bS20 (89 aa).

Belongs to the bacterial ribosomal protein bS20 family.

Its function is as follows. Binds directly to 16S ribosomal RNA. The polypeptide is Small ribosomal subunit protein bS20 (Hahella chejuensis (strain KCTC 2396)).